The sequence spans 471 residues: Glutamate--tRNA ligase (471 aa).

The 'HIGH' region signature appears at 9–19; that stretch reads PSPTGYLHVGG. C98, C100, C125, and H127 together coordinate Zn(2+). Residues 237–241 carry the 'KMSKS' region motif; the sequence is KLSKR. K240 is a binding site for ATP.

It belongs to the class-I aminoacyl-tRNA synthetase family. Glutamate--tRNA ligase type 1 subfamily. As to quaternary structure, monomer. It depends on Zn(2+) as a cofactor.

Its subcellular location is the cytoplasm. It catalyses the reaction tRNA(Glu) + L-glutamate + ATP = L-glutamyl-tRNA(Glu) + AMP + diphosphate. Its function is as follows. Catalyzes the attachment of glutamate to tRNA(Glu) in a two-step reaction: glutamate is first activated by ATP to form Glu-AMP and then transferred to the acceptor end of tRNA(Glu). This chain is Glutamate--tRNA ligase, found in Cronobacter sakazakii (strain ATCC BAA-894) (Enterobacter sakazakii).